We begin with the raw amino-acid sequence, 377 residues long: Nitric oxide reductase FlRd-NAD(+) reductase (377 aa).

This sequence belongs to the FAD-dependent oxidoreductase family. FAD serves as cofactor.

Its subcellular location is the cytoplasm. It catalyses the reaction 2 reduced [nitric oxide reductase rubredoxin domain] + NAD(+) + H(+) = 2 oxidized [nitric oxide reductase rubredoxin domain] + NADH. Its pathway is nitrogen metabolism; nitric oxide reduction. Functionally, one of at least two accessory proteins for anaerobic nitric oxide (NO) reductase. Reduces the rubredoxin moiety of NO reductase. This Salmonella gallinarum (strain 287/91 / NCTC 13346) protein is Nitric oxide reductase FlRd-NAD(+) reductase.